A 572-amino-acid polypeptide reads, in one-letter code: M-phase inducer phosphatase 3 (572 aa).

Disordered stretches follow at residues 95-117 (NLGDETAPLPTESPDRMSSGKLE) and 304-354 (SPSM…QRRG). Residues 420–527 (LVEKFFIIDC…FFPEYKELCE (108 aa)) enclose the Rhodanese domain. The active site involves Cys-476.

It belongs to the MPI phosphatase family.

It catalyses the reaction O-phospho-L-tyrosyl-[protein] + H2O = L-tyrosyl-[protein] + phosphate. In terms of biological role, this protein functions as a dosage-dependent inducer in mitotic control. It is a tyrosine protein phosphatase required for progression of the cell cycle. It may directly dephosphorylate p34(cdc2) and activate the p34(cdc2) kinase activity. In Xenopus laevis (African clawed frog), this protein is M-phase inducer phosphatase 3 (cdc25-3).